A 1645-amino-acid polypeptide reads, in one-letter code: Thrombospondin type-1 domain-containing protein 7A (1645 aa).

The signal sequence occupies residues 1–38; sequence MGLRAGRLASPSRGVLQLLRLPLLLLLLLSSGARGAAA. Residues 39 to 1595 are Extracellular-facing; sequence QGDTEVPTLY…FGPDGRLKTW (1557 aa). TSP type-1 domains are found at residues 46-105, 109-181, and 183-236; these read TLYL…KVCD, ELYD…IPCQ, and DCIV…NPCE. Asn-223 is a glycosylation site (N-linked (GlcNAc...) asparagine). A disordered region spans residues 255-300; that stretch reads PHTRQARQARRRGKNKEREKERGKAVKDPEARELIKKKRNRNRQNR. The stretch at 256 to 304 forms a coiled coil; that stretch reads HTRQARQARRRGKNKEREKERGKAVKDPEARELIKKKRNRNRQNRQENR. A compositionally biased stretch (basic residues) spans 258–269; it reads RQARQARRRGKN. Basic and acidic residues predominate over residues 270–288; that stretch reads KEREKERGKAVKDPEAREL. Residues 289 to 298 show a composition bias toward basic residues; that stretch reads IKKKRNRNRQ. Asn-321 carries N-linked (GlcNAc...) asparagine glycosylation. TSP type-1 domains lie at 349–405, 412–499, 501–563, 623–684, 685–758, 760–820, 821–893, 895–948, 949–1022, 1024–1084, 1085–1152, 1154–1208, 1209–1272, 1274–1329, 1330–1400, and 1402–1463; these read ECQV…VSQG, ATYG…VPCP, ECEV…PSCY, DCVL…HPCT, VYHW…LPCR, DCVV…PTCH, SYRW…IPCQ, DCQF…CPCD, KYNA…IPCP, DCKL…SDCN, QYIW…LPCP, DCVI…KNCY, HYDY…VECP, NCQL…KPCY, RWQY…QPCP, and DCYL…GQCY. Disulfide bonds link Cys-424–Cys-494, Cys-444–Cys-498, and Cys-455–Cys-483. The N-linked (GlcNAc...) asparagine glycan is linked to Asn-439. N-linked (GlcNAc...) asparagine glycosylation occurs at Asn-489. Cystine bridges form between Cys-624–Cys-666 and Cys-635–Cys-639. N-linked (GlcNAc...) asparagine glycosylation is present at Asn-668. 7 cysteine pairs are disulfide-bonded: Cys-678/Cys-683, Cys-696/Cys-753, Cys-717/Cys-757, Cys-728/Cys-741, Cys-761/Cys-803, Cys-772/Cys-776, and Cys-813/Cys-819. Asn-706 is a glycosylation site (N-linked (GlcNAc...) asparagine). The N-linked (GlcNAc...) asparagine glycan is linked to Asn-957. Cystine bridges form between Cys-961/Cys-1017, Cys-983/Cys-1021, Cys-994/Cys-1007, Cys-1025/Cys-1062, Cys-1036/Cys-1040, and Cys-1079/Cys-1083. Asn-1032 carries N-linked (GlcNAc...) asparagine glycosylation. Cys-1201 and Cys-1207 are disulfide-bonded. An N-linked (GlcNAc...) asparagine glycan is attached at Asn-1213. 12 cysteine pairs are disulfide-bonded: Cys-1220–Cys-1267, Cys-1228–Cys-1271, Cys-1239–Cys-1252, Cys-1275–Cys-1313, Cys-1286–Cys-1290, Cys-1323–Cys-1328, Cys-1339–Cys-1395, Cys-1346–Cys-1399, Cys-1357–Cys-1376, Cys-1403–Cys-1447, Cys-1414–Cys-1418, and Cys-1457–Cys-1462. Asn-1264 is a glycosylation site (N-linked (GlcNAc...) asparagine). Asn-1354 carries an N-linked (GlcNAc...) asparagine glycan. Residues Asn-1488 and Asn-1535 are each glycosylated (N-linked (GlcNAc...) asparagine). A helical membrane pass occupies residues 1596 to 1616; the sequence is VYGVAAGAFVLLVFIVSMIYL. At 1617–1645 the chain is on the cytoplasmic side; it reads ACKKPKKPQRRQNNRLKPLTLAYDGDADM.

Post-translationally, proteolytic cleavage in the extracellular region generates a 210 kDa soluble form. Extensively N-glycosylated. As to expression, detected on kidney podocytes along the glomerular capillary wall (at protein level).

It localises to the cell membrane. It is found in the cell projection. The protein resides in the secreted. Its function is as follows. Plays a role in actin cytoskeleton rearrangement. In terms of biological role, the soluble form promotes endothelial cell migration and filopodia formation during sprouting angiogenesis via a FAK-dependent mechanism. This is Thrombospondin type-1 domain-containing protein 7A (Thsd7a) from Mus musculus (Mouse).